Consider the following 65-residue polypeptide: uncharacterized protein (65 aa).

Residues 1-20 are Cytoplasmic-facing; that stretch reads MRFSNCFNKFKFCIGTEKKY. A helical transmembrane segment spans residues 21–43; that stretch reads SFPICTSTYTSFSLFACIWSIFI. At 44 to 65 the chain is on the extracellular side; it reads HISLNKSFIYQKSWYYSFFQNR.

The protein localises to the host membrane. This is an uncharacterized protein from Acidianus sp. F28 (AFV-2).